A 458-amino-acid polypeptide reads, in one-letter code: tRNA modification GTPase MnmE (458 aa).

The (6S)-5-formyl-5,6,7,8-tetrahydrofolate site is built by R23, E80, and K122. Positions 218–380 (GMKIVIAGRP…LREHLQQTMG (163 aa)) constitute a TrmE-type G domain. N228 contacts K(+). GTP-binding positions include 228–233 (NVGKSS), 247–253 (TQIPGTT), 272–275 (DTAG), and 361–363 (SAR). S232 is a binding site for Mg(2+). T247, I249, and T252 together coordinate K(+). T253 provides a ligand contact to Mg(2+). K458 is a (6S)-5-formyl-5,6,7,8-tetrahydrofolate binding site.

The protein belongs to the TRAFAC class TrmE-Era-EngA-EngB-Septin-like GTPase superfamily. TrmE GTPase family. In terms of assembly, homodimer. Heterotetramer of two MnmE and two MnmG subunits. Requires K(+) as cofactor.

Its subcellular location is the cytoplasm. Exhibits a very high intrinsic GTPase hydrolysis rate. Involved in the addition of a carboxymethylaminomethyl (cmnm) group at the wobble position (U34) of certain tRNAs, forming tRNA-cmnm(5)s(2)U34. The polypeptide is tRNA modification GTPase MnmE (Hamiltonella defensa subsp. Acyrthosiphon pisum (strain 5AT)).